Here is a 645-residue protein sequence, read N- to C-terminus: Envelope glycoprotein (645 aa).

Positions 1-33 (MESPAFSKPLKDKINPWGPLIIMGILVRAGASV) are cleaved as a signal peptide. A receptor-binding domain (RBD) region spans residues 32–237 (SVQRDSPHQV…QVLNVGPRVP (206 aa)). The Extracellular segment spans residues 34 to 585 (QRDSPHQVFN…FNRSPWFTTL (552 aa)). Residues N43 and N58 are each glycosylated (N-linked (GlcNAc...) asparagine; by host). 2 disulfide bridges follow: C113–C130 and C122–C135. Residues 259–286 (PRPPRPPPSGAASMVPGAPPPSQQPGTG) form a disordered region. N301 is a glycosylation site (N-linked (GlcNAc...) asparagine; by host). 6 disulfides stabilise this stretch: C311–C314, C311–C538, C341–C395, C360–C372, C402–C415, and C530–C537. Positions 311–314 (CWLC) match the CXXC motif. N-linked (GlcNAc...) asparagine; by host glycosylation is found at N333 and N340. N-linked (GlcNAc...) asparagine; by host glycans are attached at residues N373 and N409. Residues 447-467 (VSLTLALLLGGLTMGGIAAGV) form a fusion peptide region. Residues 490-510 (DLGALEKSVSALEKSLTSLSE) adopt a coiled-coil conformation. The segment at 513–529 (LQNRRGLDLLFLKEGGL) is immunosuppression. Positions 530-538 (CAALKEECC) match the CX6CC motif. Residues 586 to 606 (ISTIMGPLIVLLLILLFGPCI) form a helical membrane-spanning segment. A lipid anchor (S-palmitoyl cysteine; by host) is attached at C605. Residues 607–640 (LNRLVQFVKDRISVVQALVLTQQYHQLKSIDPEE) lie on the Cytoplasmic side of the membrane. A YXXL motif; contains endocytosis signal motif is present at residues 630–633 (YHQL).

The mature envelope protein (Env) consists of a trimer of SU-TM heterodimers attached by a labile interchain disulfide bond. The activated Env consists of SU monomers and TM trimers. In terms of processing, specific enzymatic cleavages in vivo yield mature proteins. Envelope glycoproteins are synthesized as an inactive precursor that is N-glycosylated and processed likely by host cell furin or by a furin-like protease in the Golgi to yield the mature SU and TM proteins. The cleavage site between SU and TM requires the minimal sequence [KR]-X-[KR]-R. The R-peptide is released from the C-terminus of the cytoplasmic tail of the TM protein upon particle formation as a result of proteolytic cleavage by the viral protease. Cleavage of this peptide is required for TM to become fusogenic. Post-translationally, the CXXC motif is highly conserved across a broad range of retroviral envelope proteins. It is thought to participate in the formation of a labile disulfide bond possibly with the CX6CC motif present in the transmembrane protein. Isomerization of the intersubunit disulfide bond to an SU intrachain disulfide bond is thought to occur upon receptor recognition in order to allow membrane fusion. The transmembrane protein is palmitoylated. In terms of processing, the R-peptide is palmitoylated.

The protein resides in the virion membrane. It is found in the host cell membrane. Functionally, the surface protein (SU) attaches the virus to the host cell by binding to its receptor. This interaction activates a thiol in a CXXC motif of the C-terminal domain, where the other Cys residue participates in the formation of the intersubunit disulfide. The activated thiol will attack the disulfide and cause its isomerization into a disulfide isomer within the motif. This leads to SU displacement and TM refolding, and is thought to activate its fusogenic potential by unmasking its fusion peptide. Fusion occurs at the host cell plasma membrane. The transmembrane protein (TM) acts as a class I viral fusion protein. Under the current model, the protein has at least 3 conformational states: pre-fusion native state, pre-hairpin intermediate state, and post-fusion hairpin state. During viral and target cell membrane fusion, the coiled coil regions (heptad repeats) assume a trimer-of-hairpins structure, positioning the fusion peptide in close proximity to the C-terminal region of the ectodomain. The formation of this structure appears to drive apposition and subsequent fusion of viral and target cell membranes. Membranes fusion leads to delivery of the nucleocapsid into the cytoplasm. The polypeptide is Envelope glycoprotein (env) (Xenotropic MuLV-related virus (isolate VP42) (XMRV)).